The following is a 36-amino-acid chain: Photosystem I reaction center subunit VIII (36 aa).

The chain crosses the membrane as a helical span at residues 10-29 (FVPLVGLVFPAIAMASLFLY).

This sequence belongs to the PsaI family.

The protein resides in the plastid. Its subcellular location is the chloroplast thylakoid membrane. Functionally, may help in the organization of the PsaL subunit. The polypeptide is Photosystem I reaction center subunit VIII (Oryza nivara (Indian wild rice)).